Consider the following 361-residue polypeptide: uncharacterized protein (361 aa).

This is an uncharacterized protein from Methanothermobacter thermautotrophicus (Methanobacterium thermoformicicum).